The primary structure comprises 143 residues: Small ribosomal subunit protein bS18 (143 aa).

The segment at 1–72 (MARPDMGGPK…RGGEEGGRRG (72 aa)) is disordered. A compositionally biased stretch (gly residues) spans 10–50 (KSSGGFGGPRSGGGFGGGGYGGGGGGGGGYGGGGGGGFGGR). Basic and acidic residues predominate over residues 51–70 (GGDRGDRGDRDDRGGEEGGR).

Belongs to the bacterial ribosomal protein bS18 family. In terms of assembly, part of the 30S ribosomal subunit. Forms a tight heterodimer with protein bS6.

In terms of biological role, binds as a heterodimer with protein bS6 to the central domain of the 16S rRNA, where it helps stabilize the platform of the 30S subunit. In Anaeromyxobacter sp. (strain Fw109-5), this protein is Small ribosomal subunit protein bS18.